Reading from the N-terminus, the 195-residue chain is Glycine-rich protein A3 (195 aa).

Disordered stretches follow at residues 23-103 and 159-182; these read AGGG…GVAG and VMESLSRESTGRARSTDTRSGSNL. Residues 47–77 are compositionally biased toward gly residues; sequence PAGGGYPPQGYPPAGGGYPPQGYPPAGGGYP. Residues 82-94 show a composition bias toward low complexity; the sequence is PPAGHHSGSSAPH. Basic and acidic residues predominate over residues 163–175; that stretch reads LSRESTGRARSTD.

This Daucus carota (Wild carrot) protein is Glycine-rich protein A3.